The primary structure comprises 301 residues: uncharacterized protein (301 aa).

A divalent metal cation is bound by residues glutamate 146, glutamate 148, and aspartate 177.

The protein belongs to the FAH family.

This is an uncharacterized protein from Staphylococcus haemolyticus (strain JCSC1435).